Here is a 347-residue protein sequence, read N- to C-terminus: UDP-N-acetylenolpyruvoylglucosamine reductase (347 aa).

The FAD-binding PCMH-type domain occupies 17–187 (IEQLAAQLVV…TAVGLKFAKA (171 aa)). Arginine 163 is a catalytic residue. Serine 232 (proton donor) is an active-site residue. Glutamate 327 is an active-site residue.

This sequence belongs to the MurB family. FAD serves as cofactor.

The protein localises to the cytoplasm. It carries out the reaction UDP-N-acetyl-alpha-D-muramate + NADP(+) = UDP-N-acetyl-3-O-(1-carboxyvinyl)-alpha-D-glucosamine + NADPH + H(+). Its pathway is cell wall biogenesis; peptidoglycan biosynthesis. Its function is as follows. Cell wall formation. In Vibrio cholerae serotype O1 (strain ATCC 39315 / El Tor Inaba N16961), this protein is UDP-N-acetylenolpyruvoylglucosamine reductase.